A 298-amino-acid polypeptide reads, in one-letter code: MHSSKARYLVFFQYYGTKYSGVMETPITQSVLGVQNYLEVAAQKLRPVGTIKFFISSRTDSGVHAICNLAHVDIERAKGKPPFTEEILVQAMNHHLQPEPIRLLKAIRVCDNFHARHNALSRTYVYRVAAGCSRPELPVFEGNLCWAIQDGLNVTAINEASKMLLGTHNFSAFRSANSENAFKSPIKTLQQADINPSCGILTHHWQSRNLQFWDFTFRARSFLYKQVRRMTGALVAVGQGRLTPQQIKEFLENQDPNCFLGNFVAPPHGLFLKDVEYDGTELNGFSAEETQKYSSHLN.

Asp-60 functions as the Nucleophile in the catalytic mechanism. Position 124 (Tyr-124) interacts with substrate.

Belongs to the tRNA pseudouridine synthase TruA family.

It catalyses the reaction a uridine in tRNA = a pseudouridine in tRNA. The sequence is that of tRNA pseudouridine synthase-like 1 (pusl1) from Xenopus laevis (African clawed frog).